A 242-amino-acid chain; its full sequence is uncharacterized protein (242 aa).

3 residues coordinate S-adenosyl-L-methionine: glycine 198, isoleucine 218, and leucine 227.

Belongs to the class IV-like SAM-binding methyltransferase superfamily. RNA methyltransferase TrmH family.

This is an uncharacterized protein from Mycoplasma genitalium (strain ATCC 33530 / DSM 19775 / NCTC 10195 / G37) (Mycoplasmoides genitalium).